Consider the following 124-residue polypeptide: Large ribosomal subunit protein bL19 (124 aa).

This sequence belongs to the bacterial ribosomal protein bL19 family.

This protein is located at the 30S-50S ribosomal subunit interface and may play a role in the structure and function of the aminoacyl-tRNA binding site. This Acidiphilium cryptum (strain JF-5) protein is Large ribosomal subunit protein bL19.